The primary structure comprises 208 residues: N-(5'-phosphoribosyl)anthranilate isomerase (208 aa).

This sequence belongs to the TrpF family.

It catalyses the reaction N-(5-phospho-beta-D-ribosyl)anthranilate = 1-(2-carboxyphenylamino)-1-deoxy-D-ribulose 5-phosphate. The protein operates within amino-acid biosynthesis; L-tryptophan biosynthesis; L-tryptophan from chorismate: step 3/5. This chain is N-(5'-phosphoribosyl)anthranilate isomerase, found in Neisseria gonorrhoeae (strain NCCP11945).